A 713-amino-acid polypeptide reads, in one-letter code: Denticleless protein homolog (713 aa).

WD repeat units follow at residues 47 to 89 (GAAV…VQRL), 96 to 135 (AHTN…LIGE), and 138 to 178 (GHQC…KDGF). The short motif at 168–171 (WDTR) is the DDB1-binding motif element. Positions 197 to 204 (PSKVKKRK) match the Nuclear localization signal motif. WD repeat units lie at residues 215-254 (DSQQ…SAYR), 270-309 (TRKL…TEPV), 314-355 (GHQN…VPPV), and 359-399 (GHCQ…EDSA). The DDB1-binding motif motif lies at 244 to 247 (WDLR). 3 disordered regions span residues 474-544 (TPQR…EKRA), 604-623 (GFDQ…NGTV), and 635-700 (SDLR…TPGS). Composition is skewed to polar residues over residues 504–516 (TPKS…TKTP) and 612–623 (GPSTSFLINGTV). The segment covering 635–644 (SDLRDKENSS) has biased composition (basic and acidic residues). A compositionally biased stretch (polar residues) spans 686–699 (NAPNSPVSVPTTPG).

It belongs to the WD repeat cdt2 family. As to quaternary structure, component of the DCX(DTL) E3 ubiquitin ligase complex, at least composed of cul4 (cul4a or cul4b), ddb1, dtl/cdt2 and rbx1.

The protein localises to the nucleus. It localises to the cytoplasm. The protein resides in the cytoskeleton. Its subcellular location is the microtubule organizing center. It is found in the centrosome. The protein localises to the chromosome. The protein operates within protein modification; protein ubiquitination. Its function is as follows. Substrate-specific adapter of a DCX (DDB1-CUL4-X-box) E3 ubiquitin-protein ligase complex required for cell cycle control, DNA damage response and translesion DNA synthesis. The DCX(DTL) complex, also named CRL4(CDT2) complex, mediates the polyubiquitination and subsequent degradation of CDT1, CDKN1A/p21(CIP1), KMT5A and SDE2. CDT1 degradation in response to DNA damage is necessary to ensure proper cell cycle regulation of DNA replication. CDKN1A/p21(CIP1) degradation during S phase or following UV irradiation is essential to control replication licensing. KMT5A degradation is also important for a proper regulation of mechanisms such as TGF-beta signaling, cell cycle progression, DNA repair and cell migration. Most substrates require their interaction with PCNA for their polyubiquitination: substrates interact with PCNA via their PIP-box, and those containing the 'K+4' motif in the PIP box, recruit the DCX(DTL) complex, leading to their degradation. In undamaged proliferating cells, the DCX(DTL) complex also promotes the 'Lys-164' monoubiquitination of PCNA, thereby being involved in PCNA-dependent translesion DNA synthesis. May play a role in the regulation of the circadian clock. This is Denticleless protein homolog (dtl) from Xenopus tropicalis (Western clawed frog).